The chain runs to 208 residues: Uracil phosphoribosyltransferase (208 aa).

Residues Arg-78, Arg-103, and 130-138 contribute to the 5-phospho-alpha-D-ribose 1-diphosphate site; that span reads DPMLATGGS. Uracil is bound by residues Ile-193 and 198 to 200; that span reads GDA. 5-phospho-alpha-D-ribose 1-diphosphate is bound at residue Asp-199.

It belongs to the UPRTase family. Mg(2+) serves as cofactor.

It catalyses the reaction UMP + diphosphate = 5-phospho-alpha-D-ribose 1-diphosphate + uracil. Its pathway is pyrimidine metabolism; UMP biosynthesis via salvage pathway; UMP from uracil: step 1/1. Allosterically activated by GTP. Catalyzes the conversion of uracil and 5-phospho-alpha-D-ribose 1-diphosphate (PRPP) to UMP and diphosphate. The chain is Uracil phosphoribosyltransferase from Klebsiella pneumoniae subsp. pneumoniae (strain ATCC 700721 / MGH 78578).